The sequence spans 3790 residues: Transcription-associated protein 1 (3790 aa).

HEAT repeat units lie at residues 98–136, 335–381, 740–778, 1185–1223, 1332–1370, and 1826–1864; these read RQHVKTIITMMLKILKTDNEENVLVCLRIIIELHKHFRP, TDLR…HVRQ, DLLYQEFLPLLPNLLEGLNRLQSGFHKQHMRDLFVELCL, AKATYEVIHELVRHITSPNTIVREESMVLLKHIGTIQSK, IGYKEKIINIIFKVMESDKSELQTTAFHCMKHFITGVTL, and AIHKKIVLQVFHSLLKGHALEARSIVKQALDVLTPAMPL. Residues 2610-3173 enclose the FAT domain; that stretch reads LLAYLGKSHN…YFPIRTLYLT (564 aa). The PI3K/PI4K catalytic domain occupies 3429 to 3753; the sequence is MPRVEIVQKN…AVDIIMTRFN (325 aa). Positions 3435–3441 are G-loop; the sequence is VQKNNTA. Residues 3616–3624 are catalytic loop; sequence NLTRLNADM. Positions 3636 to 3661 are activation loop; it reads ISYFKFDVNDDKCQLNQHRPVPFRLT. Positions 3758-3790 constitute an FATC domain; it reads FDSIENKKISVLVQSATNIDNLCRMDPAWHPWL.

The protein belongs to the PI3/PI4-kinase family. TRA1 subfamily. As to quaternary structure, component of the Tip60 chromatin-remodeling complex which contains the catalytic subunit Tip60 and the subunits Domino, Tra1, Brd8, E(Pc), DMAP1, Pontin, Reptin, Ing3, Act87E, BAP55, Mrg15, MrgBP, Gas41 and YL-1. Probable component of some SAGA complex. Interacts with Spt3, Gcn5, Ada3 and Ada2b. As to expression, ubiquitous.

It is found in the nucleus. The protein localises to the cytoplasm. Its subcellular location is the chromosome. Its function is as follows. Part of the Tip60 chromatin-remodeling complex which is involved in DNA repair. Upon induction of DNA double-strand breaks, this complex acetylates phosphorylated H2AV in nucleosomes and exchanges it with unmodified H2AV. During wing development, required for activity of Notch and its coactivator mam. Function in promoting mam function is likely to involve both the Tip60 and SAGA complexes. This Drosophila melanogaster (Fruit fly) protein is Transcription-associated protein 1 (Nipped-A).